The following is a 412-amino-acid chain: Putative odorant receptor 85d (412 aa).

Residues 1–56 are Cytoplasmic-facing; the sequence is MLTKKDTQSAKEQEKLKAIPLHSFLKYANVFYLSIGMMAYDHKYSQKWKEVLLHWT. The helical transmembrane segment at 57-77 threads the bilayer; the sequence is FIAQMVNLNTVLISELIYVFL. Residues 78-84 lie on the Extracellular side of the membrane; that stretch reads AIGKGSN. The helical transmembrane segment at 85-105 threads the bilayer; sequence FLEATMNLSFIGFVIVGDFKI. Topologically, residues 106-152 are cytoplasmic; it reads WNISRQRKRLTQVVSRLEELHPQGLAQQEPYNIGHHLSGYSRYSKFY. A helical membrane pass occupies residues 153 to 173; the sequence is FGMHMVLIWTYNLYWAVYYLV. Residues 174–219 lie on the Extracellular side of the membrane; sequence CDFWLGMRQFERMLPYYCWVPWDWSTGYSYYFMYISQNIGGQACLS. Residues 220-240 form a helical membrane-spanning segment; that stretch reads GQLAADMLMCALVTLVVMHFI. Topologically, residues 241-282 are cytoplasmic; sequence RLSAHIESHVAGIGSFQHDLEFLQATVAYHQSLIHLCQDINE. A helical membrane pass occupies residues 283 to 303; it reads IFGVSLLSNFVSSSFIICFVG. Residues 304–314 are Extracellular-facing; sequence FQMTIGSKIDN. Residues 315–335 traverse the membrane as a helical segment; the sequence is LVMLVLFLFCAMVQVFMIATH. The Cytoplasmic portion of the chain corresponds to 336 to 382; that stretch reads AQRLVDASEQIGQAVYNHDWFRADLRYRKMLILIIKRAQQPSRLKAT. The helical transmembrane segment at 383–403 threads the bilayer; that stretch reads MFLNISLVTVSDLLQLSYKFF. Residues 404-412 lie on the Extracellular side of the membrane; the sequence is ALLRTMYVN.

This sequence belongs to the insect chemoreceptor superfamily. Heteromeric odorant receptor channel (TC 1.A.69) family. Or49a subfamily. As to quaternary structure, interacts with Orco. Complexes exist early in the endomembrane system in olfactory sensory neurons (OSNs), coupling these complexes to the conserved ciliary trafficking pathway. As to expression, expressed in olfactory sensory neurons in the maxillary palp.

It localises to the cell membrane. In terms of biological role, odorant receptor which mediates acceptance or avoidance behavior, depending on its substrates. The odorant receptor repertoire encodes a large collection of odor stimuli that vary widely in identity, intensity, and duration. May form a complex with Orco to form odorant-sensing units, providing sensitive and prolonged odorant signaling and calcium permeability. The chain is Putative odorant receptor 85d (Or85d) from Drosophila melanogaster (Fruit fly).